A 362-amino-acid polypeptide reads, in one-letter code: S-adenosylmethionine decarboxylase proenzyme (362 aa).

Catalysis depends on residues E11 and E14. Residue S71 is the Schiff-base intermediate with substrate; via pyruvic acid of the active site. The residue at position 71 (S71) is a Pyruvic acid (Ser); by autocatalysis. Residue C85 is the Proton donor; for catalytic activity of the active site. Active-site proton acceptor; for processing activity residues include S234 and H247.

This sequence belongs to the eukaryotic AdoMetDC family. It depends on pyruvate as a cofactor. Post-translationally, is synthesized initially as an inactive proenzyme. Formation of the active enzyme involves a self-maturation process in which the active site pyruvoyl group is generated from an internal serine residue via an autocatalytic post-translational modification. Two non-identical subunits are generated from the proenzyme in this reaction, and the pyruvate is formed at the N-terminus of the alpha chain, which is derived from the carboxyl end of the proenzyme. The post-translation cleavage follows an unusual pathway, termed non-hydrolytic serinolysis, in which the side chain hydroxyl group of the serine supplies its oxygen atom to form the C-terminus of the beta chain, while the remainder of the serine residue undergoes an oxidative deamination to produce ammonia and the pyruvoyl group blocking the N-terminus of the alpha chain.

The enzyme catalyses S-adenosyl-L-methionine + H(+) = S-adenosyl 3-(methylsulfanyl)propylamine + CO2. It participates in amine and polyamine biosynthesis; S-adenosylmethioninamine biosynthesis; S-adenosylmethioninamine from S-adenosyl-L-methionine: step 1/1. This Ipomoea batatas (Sweet potato) protein is S-adenosylmethionine decarboxylase proenzyme (SAMDC).